The following is a 168-amino-acid chain: S-ribosylhomocysteine lyase (168 aa).

Residues histidine 54, histidine 58, and cysteine 128 each coordinate Fe cation.

This sequence belongs to the LuxS family. Homodimer. It depends on Fe cation as a cofactor.

The enzyme catalyses S-(5-deoxy-D-ribos-5-yl)-L-homocysteine = (S)-4,5-dihydroxypentane-2,3-dione + L-homocysteine. In terms of biological role, involved in the synthesis of autoinducer 2 (AI-2) which is secreted by bacteria and is used to communicate both the cell density and the metabolic potential of the environment. The regulation of gene expression in response to changes in cell density is called quorum sensing. Catalyzes the transformation of S-ribosylhomocysteine (RHC) to homocysteine (HC) and 4,5-dihydroxy-2,3-pentadione (DPD). This Neisseria meningitidis serogroup A / serotype 4A (strain DSM 15465 / Z2491) protein is S-ribosylhomocysteine lyase.